The primary structure comprises 309 residues: Intron-encoded DNA endonuclease ai2a (309 aa).

It belongs to the LAGLIDADG endonuclease family.

The protein resides in the mitochondrion. Functionally, mitochondrial DNA endonuclease involved in intron homing. Cleaves only one strand of intronless DNA sequence at the site which coincides with the I-SceII cleavage recognition site. This Dictyostelium discoideum (Social amoeba) protein is Intron-encoded DNA endonuclease ai2a (ai2a).